Here is a 375-residue protein sequence, read N- to C-terminus: Beta sliding clamp (375 aa).

This sequence belongs to the beta sliding clamp family. Forms a ring-shaped head-to-tail homodimer around DNA which binds and tethers DNA polymerases and other proteins to the DNA. The DNA replisome complex has a single clamp-loading complex (3 tau and 1 each of delta, delta', psi and chi subunits) which binds 3 Pol III cores (1 core on the leading strand and 2 on the lagging strand) each with a beta sliding clamp dimer. Additional proteins in the replisome are other copies of gamma, psi and chi, Ssb, DNA helicase and RNA primase.

It is found in the cytoplasm. In terms of biological role, confers DNA tethering and processivity to DNA polymerases and other proteins. Acts as a clamp, forming a ring around DNA (a reaction catalyzed by the clamp-loading complex) which diffuses in an ATP-independent manner freely and bidirectionally along dsDNA. Initially characterized for its ability to contact the catalytic subunit of DNA polymerase III (Pol III), a complex, multichain enzyme responsible for most of the replicative synthesis in bacteria; Pol III exhibits 3'-5' exonuclease proofreading activity. The beta chain is required for initiation of replication as well as for processivity of DNA replication. The sequence is that of Beta sliding clamp (dnaN) from Synechococcus elongatus (strain ATCC 33912 / PCC 7942 / FACHB-805) (Anacystis nidulans R2).